The chain runs to 495 residues: Aspartyl/glutamyl-tRNA(Asn/Gln) amidotransferase subunit B (495 aa).

Belongs to the GatB/GatE family. GatB subfamily. As to quaternary structure, heterotrimer of A, B and C subunits.

It carries out the reaction L-glutamyl-tRNA(Gln) + L-glutamine + ATP + H2O = L-glutaminyl-tRNA(Gln) + L-glutamate + ADP + phosphate + H(+). The catalysed reaction is L-aspartyl-tRNA(Asn) + L-glutamine + ATP + H2O = L-asparaginyl-tRNA(Asn) + L-glutamate + ADP + phosphate + 2 H(+). Allows the formation of correctly charged Asn-tRNA(Asn) or Gln-tRNA(Gln) through the transamidation of misacylated Asp-tRNA(Asn) or Glu-tRNA(Gln) in organisms which lack either or both of asparaginyl-tRNA or glutaminyl-tRNA synthetases. The reaction takes place in the presence of glutamine and ATP through an activated phospho-Asp-tRNA(Asn) or phospho-Glu-tRNA(Gln). This chain is Aspartyl/glutamyl-tRNA(Asn/Gln) amidotransferase subunit B, found in Crocosphaera subtropica (strain ATCC 51142 / BH68) (Cyanothece sp. (strain ATCC 51142)).